Here is a 200-residue protein sequence, read N- to C-terminus: NADH-quinone oxidoreductase subunit I (200 aa).

4Fe-4S ferredoxin-type domains are found at residues 73-102 (RLLESGNERCIGCGLCEKICVSNCIRMETT) and 112-141 (LNYSINFGRCVYCGLCADVCPELAIVHGGD). Residues Cys82, Cys85, Cys88, Cys92, Cys121, Cys124, Cys127, and Cys131 each coordinate [4Fe-4S] cluster.

It belongs to the complex I 23 kDa subunit family. As to quaternary structure, NDH-1 is composed of 14 different subunits. Subunits NuoA, H, J, K, L, M, N constitute the membrane sector of the complex. Requires [4Fe-4S] cluster as cofactor.

It is found in the cell inner membrane. It catalyses the reaction a quinone + NADH + 5 H(+)(in) = a quinol + NAD(+) + 4 H(+)(out). In terms of biological role, NDH-1 shuttles electrons from NADH, via FMN and iron-sulfur (Fe-S) centers, to quinones in the respiratory chain. The immediate electron acceptor for the enzyme in this species is believed to be ubiquinone. Couples the redox reaction to proton translocation (for every two electrons transferred, four hydrogen ions are translocated across the cytoplasmic membrane), and thus conserves the redox energy in a proton gradient. The protein is NADH-quinone oxidoreductase subunit I of Campylobacter hominis (strain ATCC BAA-381 / DSM 21671 / CCUG 45161 / LMG 19568 / NCTC 13146 / CH001A).